Reading from the N-terminus, the 368-residue chain is Quinolinate synthase (368 aa).

H46 and S63 together coordinate iminosuccinate. C110 is a binding site for [4Fe-4S] cluster. Iminosuccinate contacts are provided by residues 141–143 (YVN) and S162. C230 contributes to the [4Fe-4S] cluster binding site. Residues 256–258 (HPE) and T273 contribute to the iminosuccinate site. C320 serves as a coordination point for [4Fe-4S] cluster.

This sequence belongs to the quinolinate synthase family. Type 3 subfamily. It depends on [4Fe-4S] cluster as a cofactor.

The protein localises to the cytoplasm. The enzyme catalyses iminosuccinate + dihydroxyacetone phosphate = quinolinate + phosphate + 2 H2O + H(+). It functions in the pathway cofactor biosynthesis; NAD(+) biosynthesis; quinolinate from iminoaspartate: step 1/1. In terms of biological role, catalyzes the condensation of iminoaspartate with dihydroxyacetone phosphate to form quinolinate. The sequence is that of Quinolinate synthase from Bacillus mycoides (strain KBAB4) (Bacillus weihenstephanensis).